A 546-amino-acid chain; its full sequence is Chaperonin GroEL (546 aa).

Residues threonine 29 to proline 32, lysine 50, aspartate 86 to threonine 90, glycine 414, asparagine 478 to alanine 480, and aspartate 494 contribute to the ATP site.

The protein belongs to the chaperonin (HSP60) family. As to quaternary structure, forms a cylinder of 14 subunits composed of two heptameric rings stacked back-to-back. Interacts with the co-chaperonin GroES.

It localises to the cytoplasm. The catalysed reaction is ATP + H2O + a folded polypeptide = ADP + phosphate + an unfolded polypeptide.. In terms of biological role, together with its co-chaperonin GroES, plays an essential role in assisting protein folding. The GroEL-GroES system forms a nano-cage that allows encapsulation of the non-native substrate proteins and provides a physical environment optimized to promote and accelerate protein folding. In Psychrobacter arcticus (strain DSM 17307 / VKM B-2377 / 273-4), this protein is Chaperonin GroEL.